Here is a 1034-residue protein sequence, read N- to C-terminus: Condensin complex subunit 3 (1034 aa).

7 HEAT repeats span residues 95–132, 139–176, 178–213, 242–279, 281–317, 439–476, and 618–655; these read SPVN…NLPE, DLFD…PSDP, CPVS…SLPK, LTIA…QYSE, DVLD…LVQN, TSLI…PIVT, and DFAR…LFGM. Polar residues predominate over residues 663-672; sequence TNPDDSQCKA. The interval 663 to 693 is disordered; it reads TNPDDSQCKAQENADEDISEQEKPGSVDENL. HEAT repeat units follow at residues 703-740, 785-823, and 878-915; these read ATVN…SGRL, CFAE…DLTR, and ENST…SGRE. The span at 909–949 shows a compositional bias: basic and acidic residues; the sequence is QLRSGREEHRVSKETEPQVSKETEDRTNLQENEEGKQKDEA. A disordered region spans residues 909-1034; it reads QLRSGREEHR…LSKLLNEEAN (126 aa). Over residues 964-984 the composition is skewed to basic residues; sequence RGKATKGRRKGPAAAATRRKA. Residues 985 to 999 are compositionally biased toward basic and acidic residues; that stretch reads SKAEEAEAEMERQEE.

This sequence belongs to the CND3 (condensin subunit 3) family. As to quaternary structure, component of the condensin complex, which contains the XCAP-E/SMC2 and XCAP-C/SMC4 heterodimer, and three non SMC subunits that probably regulate the complex: XCAP-H/NCAPH, XCAP-D2/NCAPD2 and XCAP-G/NCAPG. In terms of processing, phosphorylated by cdk1. Its phosphorylation, as well as that of XCAP-D2 and XCAP-H subunits, activates the condensin complex and is required for chromosome condensation.

It localises to the nucleus. The protein localises to the cytoplasm. It is found in the chromosome. Regulatory subunit of the condensin complex, a complex required for conversion of interphase chromatin into mitotic-like condense chromosomes. The condensin complex probably introduces positive supercoils into relaxed DNA in the presence of type I topoisomerases and converts nicked DNA into positive knotted forms in the presence of type II topoisomerase. This Xenopus laevis (African clawed frog) protein is Condensin complex subunit 3 (ncapg).